Consider the following 237-residue polypeptide: Probable transcriptional regulatory protein Mfl546 (237 aa).

The tract at residues 1–20 is disordered; the sequence is MGRAHEVRAASMAKTAAKKS. Residues 9–20 show a composition bias toward low complexity; sequence AASMAKTAAKKS.

Belongs to the TACO1 family.

The protein localises to the cytoplasm. This Mesoplasma florum (strain ATCC 33453 / NBRC 100688 / NCTC 11704 / L1) (Acholeplasma florum) protein is Probable transcriptional regulatory protein Mfl546.